Here is a 376-residue protein sequence, read N- to C-terminus: Glucose-1-phosphate adenylyltransferase (376 aa).

Residues Tyr101, Gly166, 181–182 (EK), and Ser192 each bind alpha-D-glucose 1-phosphate.

It belongs to the bacterial/plant glucose-1-phosphate adenylyltransferase family. As to quaternary structure, homotetramer.

It catalyses the reaction alpha-D-glucose 1-phosphate + ATP + H(+) = ADP-alpha-D-glucose + diphosphate. The protein operates within glycan biosynthesis; glycogen biosynthesis. Functionally, involved in the biosynthesis of ADP-glucose, a building block required for the elongation reactions to produce glycogen. Catalyzes the reaction between ATP and alpha-D-glucose 1-phosphate (G1P) to produce pyrophosphate and ADP-Glc. This is Glucose-1-phosphate adenylyltransferase from Bacillus thuringiensis (strain Al Hakam).